A 597-amino-acid polypeptide reads, in one-letter code: Elongation factor 4 (597 aa).

Positions 2 to 184 (DHIRNFSIIA…ALIAKVPPPK (183 aa)) constitute a tr-type G domain. GTP contacts are provided by residues 14-19 (DHGKST) and 131-134 (NKID).

Belongs to the TRAFAC class translation factor GTPase superfamily. Classic translation factor GTPase family. LepA subfamily.

Its subcellular location is the cell inner membrane. It catalyses the reaction GTP + H2O = GDP + phosphate + H(+). Functionally, required for accurate and efficient protein synthesis under certain stress conditions. May act as a fidelity factor of the translation reaction, by catalyzing a one-codon backward translocation of tRNAs on improperly translocated ribosomes. Back-translocation proceeds from a post-translocation (POST) complex to a pre-translocation (PRE) complex, thus giving elongation factor G a second chance to translocate the tRNAs correctly. Binds to ribosomes in a GTP-dependent manner. In Burkholderia vietnamiensis (strain G4 / LMG 22486) (Burkholderia cepacia (strain R1808)), this protein is Elongation factor 4.